The sequence spans 234 residues: Small ribosomal subunit protein uS3 (234 aa).

One can recognise a KH type-2 domain in the interval 39–107 (IRKFLKKELY…EVSINIKEVK (69 aa)).

The protein belongs to the universal ribosomal protein uS3 family. In terms of assembly, part of the 30S ribosomal subunit. Forms a tight complex with proteins S10 and S14.

In terms of biological role, binds the lower part of the 30S subunit head. Binds mRNA in the 70S ribosome, positioning it for translation. The sequence is that of Small ribosomal subunit protein uS3 from Helicobacter acinonychis (strain Sheeba).